The sequence spans 184 residues: ATP synthase subunit delta (184 aa).

It belongs to the ATPase delta chain family. In terms of assembly, F-type ATPases have 2 components, F(1) - the catalytic core - and F(0) - the membrane proton channel. F(1) has five subunits: alpha(3), beta(3), gamma(1), delta(1), epsilon(1). CF(0) has four main subunits: a(1), b(1), b'(1) and c(10-14). The alpha and beta chains form an alternating ring which encloses part of the gamma chain. F(1) is attached to F(0) by a central stalk formed by the gamma and epsilon chains, while a peripheral stalk is formed by the delta, b and b' chains.

Its subcellular location is the cell inner membrane. Functionally, f(1)F(0) ATP synthase produces ATP from ADP in the presence of a proton or sodium gradient. F-type ATPases consist of two structural domains, F(1) containing the extramembraneous catalytic core and F(0) containing the membrane proton channel, linked together by a central stalk and a peripheral stalk. During catalysis, ATP synthesis in the catalytic domain of F(1) is coupled via a rotary mechanism of the central stalk subunits to proton translocation. This protein is part of the stalk that links CF(0) to CF(1). It either transmits conformational changes from CF(0) to CF(1) or is implicated in proton conduction. This Erythrobacter litoralis (strain HTCC2594) protein is ATP synthase subunit delta.